Reading from the N-terminus, the 1202-residue chain is Protein jagged-2 (1202 aa).

The Extracellular segment spans residues 1 to 1037; the sequence is GACCDGDGRT…ETVVMGGSST (1037 aa). Asn107 carries N-linked (GlcNAc...) asparagine glycosylation. Residues 150–194 enclose the DSL domain; the sequence is VRCDENYYSATCNKFCRPRNDFFGHYTCDQYGNKACMDGWMGKEC. 42 disulfides stabilise this stretch: Cys152-Cys161, Cys165-Cys177, Cys185-Cys194, Cys199-Cys210, Cys203-Cys216, Cys218-Cys227, Cys230-Cys241, Cys236-Cys247, Cys249-Cys258, Cys265-Cys277, Cys271-Cys287, Cys289-Cys298, Cys305-Cys316, Cys310-Cys325, Cys327-Cys336, Cys343-Cys354, Cys348-Cys363, Cys365-Cys374, Cys381-Cys392, Cys386-Cys401, Cys403-Cys412, Cys419-Cys429, Cys423-Cys438, Cys440-Cys449, Cys456-Cys467, Cys461-Cys476, Cys478-Cys487, Cys495-Cys506, Cys500-Cys515, Cys517-Cys526, Cys544-Cys567, Cys561-Cys577, Cys579-Cys588, Cys595-Cys606, Cys600-Cys615, Cys617-Cys626, Cys633-Cys644, Cys638-Cys653, Cys655-Cys664, Cys671-Cys682, Cys676-Cys691, and Cys693-Cys702. An EGF-like 1 domain is found at 195–228; it reads KEAVCKQGCNLLHGGCTVPGECRCSYGWQGKFCD. In terms of domain architecture, EGF-like 2; atypical spans 229–259; the sequence is ECVPYPGCVHGSCVEPWHCDCETNWGGLLCD. 2 consecutive EGF-like domains span residues 261–299 and 301–337; these read DLNY…KNCE and AEHA…PTCA. The EGF-like 5; calcium-binding domain maps to 339–375; the sequence is DIDECASNPCAAGGTCVDQVDGFECICPEQWVGATCQ. Residues 377 to 413 enclose the EGF-like 6; calcium-binding domain; it reads DANECEGKPCLNAFSCKNLIGGYYCDCLPGWKGANCH. The EGF-like 7; calcium-binding domain occupies 415-450; it reads NINDCHGQCQHGGTCKDLVNGYQCVCPRGFGGRHCE. EGF-like domains lie at 452-488 and 490-527; these read EYYK…PLCE and DVDL…KNCS. Residue Asn525 is glycosylated (N-linked (GlcNAc...) asparagine). The EGF-like 10; atypical domain occupies 529–589; the sequence is PRETCPGGAC…DSGFTGTYCH (61 aa). Residue Asn574 is glycosylated (N-linked (GlcNAc...) asparagine). In terms of domain architecture, EGF-like 11; calcium-binding spans 591 to 627; it reads NIDDCMGQPCRNGGTCIDEVDSFACFCPSGWEGELCD. The 37-residue stretch at 629–665 folds into the EGF-like 12; calcium-binding domain; that stretch reads NPNDCLPDPCHSRGRCYDLVNDFYCVCDDGWKDKTCH. EGF-like domains follow at residues 667–703 and 706–742; these read REFQ…STCT and KNSS…RTCT. Asn707 carries N-linked (GlcNAc...) asparagine glycosylation. 9 disulfides stabilise this stretch: Cys710/Cys721, Cys715/Cys730, Cys732/Cys741, Cys748/Cys759, Cys753/Cys768, Cys770/Cys779, Cys786/Cys797, Cys791/Cys806, and Cys808/Cys817. The region spanning 744–780 is the EGF-like 15; calcium-binding domain; it reads NTNDCNPLPCYNGGICVDGVNWFRCECAPGFAGPDCR. The 37-residue stretch at 782–818 folds into the EGF-like 16; calcium-binding domain; sequence NIDECQSSPCAYGATCVDEINGYRCSCPPGRSGPRCQ. Asn1015 carries an N-linked (GlcNAc...) asparagine glycan. The chain crosses the membrane as a helical span at residues 1038–1058; the sequence is GLLVPVLCSVFSVLWLACMVI. At 1059-1202 the chain is on the cytoplasmic side; sequence CVWWTRKRRK…TKDVRCAGRE (144 aa). 3 stretches are compositionally biased toward basic and acidic residues: residues 1070 to 1080, 1147 to 1159, and 1185 to 1202; these read RERSRLPRDES, LSRG…RSRE, and VDNR…AGRE. Positions 1070–1202 are disordered; the sequence is RERSRLPRDE…TKDVRCAGRE (133 aa). Ser1080 bears the Phosphoserine mark.

The protein localises to the membrane. In terms of biological role, putative Notch ligand involved in the mediation of Notch signaling. May have a role in neurogenesis in the peripheral nervous system, limb development and in the adult brain. The chain is Protein jagged-2 (Jag2) from Rattus norvegicus (Rat).